The following is a 258-amino-acid chain: Type III pantothenate kinase (258 aa).

Residue 6–13 coordinates ATP; that stretch reads DVGNTNTV. Residues Tyr100 and 107–110 each bind substrate; that span reads GADR. Asp109 (proton acceptor) is an active-site residue. Asp129 contributes to the K(+) binding site. An ATP-binding site is contributed by Thr132. Thr184 serves as a coordination point for substrate.

The protein belongs to the type III pantothenate kinase family. In terms of assembly, homodimer. It depends on NH4(+) as a cofactor. K(+) is required as a cofactor.

The protein localises to the cytoplasm. It catalyses the reaction (R)-pantothenate + ATP = (R)-4'-phosphopantothenate + ADP + H(+). It participates in cofactor biosynthesis; coenzyme A biosynthesis; CoA from (R)-pantothenate: step 1/5. Functionally, catalyzes the phosphorylation of pantothenate (Pan), the first step in CoA biosynthesis. This Geobacillus sp. (strain WCH70) protein is Type III pantothenate kinase.